The sequence spans 967 residues: RNA polymerase-associated protein RapA (967 aa).

The Helicase ATP-binding domain occupies 163 to 333; that stretch reads EVGQRHAPRV…FARLRLLDPN (171 aa). 176–183 lines the ATP pocket; the sequence is DEVGLGKT. Residues 279-282 carry the DEAH box motif; it reads DEAH. A Helicase C-terminal domain is found at 489–643; that stretch reads RVEWLLNYLT…TCPTGRTIYD (155 aa).

Belongs to the SNF2/RAD54 helicase family. RapA subfamily. In terms of assembly, interacts with the RNAP. Has a higher affinity for the core RNAP than for the holoenzyme. Its ATPase activity is stimulated by binding to RNAP.

Transcription regulator that activates transcription by stimulating RNA polymerase (RNAP) recycling in case of stress conditions such as supercoiled DNA or high salt concentrations. Probably acts by releasing the RNAP, when it is trapped or immobilized on tightly supercoiled DNA. Does not activate transcription on linear DNA. Probably not involved in DNA repair. The polypeptide is RNA polymerase-associated protein RapA (Pectobacterium carotovorum subsp. carotovorum (strain PC1)).